A 690-amino-acid polypeptide reads, in one-letter code: Glycine--tRNA ligase beta subunit (690 aa).

The protein belongs to the class-II aminoacyl-tRNA synthetase family. Tetramer of two alpha and two beta subunits.

Its subcellular location is the cytoplasm. It catalyses the reaction tRNA(Gly) + glycine + ATP = glycyl-tRNA(Gly) + AMP + diphosphate. In Desulfatibacillum aliphaticivorans, this protein is Glycine--tRNA ligase beta subunit.